A 277-amino-acid polypeptide reads, in one-letter code: Protein OPG166 (277 aa).

N-linked (GlcNAc...) asparagine; by host glycosylation is found at N29 and N58. Helical transmembrane passes span 124-144 (TMLM…EIAY), 156-176 (GILQ…AFLF), 186-206 (IIGL…KVFS), 219-239 (LIIY…GLSL), and 247-267 (LLLS…LFLV).

The protein belongs to the orthopoxvirus OPG166 protein family.

The protein resides in the host membrane. Its function is as follows. Promotes, when overexpressed, the influx of extracellular Ca(2+), leading to membrane permeability and host cell necrosis. The protein is Protein OPG166 (OPG166) of Variola virus (isolate Human/India/Ind3/1967) (VARV).